Here is a 1052-residue protein sequence, read N- to C-terminus: MRENVKRVLVIGSGPIKIAEAAEFDYSGSQALKALKEEGIETILVNSNVATVQTSRKFADKLYMIPVTWWTVERVIEKERPDAIMIGFGGQTALNVGVDLYKKEILKKYGVKVLGTPIEGIERALSREKFRETMINVNLPVPPSLSARSEEEALEKARQIGYPVMVRVSFNLGGRGSTVAWSEEDLKRDIGRALSQSYIHEVLIEKYLHHWIELEYEVMRDKHGNSAVIACIENLDPMGVHTGESTVIAPCQTLDNKEFQDMRSMSIDVAKSIDLVGECNVQFALNPLAYEYYIIETNPRMSRSSALASKATGYPLAYVSAKLALGYELYEVLNKVSGSTCACFEPSLDYVVIKIPRWDLDKFENVEHSLATEMKSVGEVMSIGRSFEEALQKAVRMLDLGEPGIIGGKVYNSKMTKIDSLRMLKERRPYWFLYASKAFKEGATIDEVYEVTGINKFFLNKIKNLVDFYESIKNNKGLDQKTLSIAKRLGFSDYQIASAVGLSEKDIRELRQKYGIEPKVKQIDTLAGEWPAVTNYLYVTYNGTEDDIEFSNGIRKLLIVGAGGFRIGVSVEFDWGVVSLLDSASKYFDEVTIINYNPETVSTDWDIARKLYFDEISVERILDLVRKEKFNYVATFAGGQIGNTISKKLEENGVKLLGTSGHSVDIAEDREKFSRLLDKLGIKQPDWISARSIEEVRKFVEMVGYPVLVRPSYVLSGSAMRIVYNDTELVSYIKKATEISSEHPVVVSKYIDNAIEAEIDGASDGRGVYGVVLEHVEEAGVHSGDATISIPFKKLSPETVHKMKESIHSISRELNIKGPFNVQFVVKNGTPYIIEMNLRASRSMPFSSKVVGKNIIDLALTGVIKGFDFDEFVELKAKSWGVKSAQFSWAQLKGAYPFLGPEMRSTGEAASLGVDFYDALLKSWLSSSPNRLPDQKGIALVYGRSNVEYLQASARNLSEYGMTVYTLSDAPIYGYEVTSSGKSVELIKDRKVEIVVTDGYLKSLDYEVRRIAVDYNVPIILNGRLGEELTKAFLLRKSNMTFYEIGEYGAGI.

The tract at residues 1–399 (MRENVKRVLV…ALQKAVRMLD (399 aa)) is carboxyphosphate synthetic domain. Residues Arg127, Arg167, Gly173, Gly174, Lys206, Leu208, Glu213, Gly239, Val240, His241, Gln282, and Glu296 each coordinate ATP. One can recognise an ATP-grasp 1 domain in the interval 131 to 325 (RETMINVNLP…LAYVSAKLAL (195 aa)). Positions 282, 296, and 298 each coordinate Mg(2+). Residues Gln282, Glu296, and Asn298 each coordinate Mn(2+). The interval 400–548 (LGEPGIIGGK…VTYNGTEDDI (149 aa)) is oligomerization domain. The carbamoyl phosphate synthetic domain stretch occupies residues 549–930 (EFSNGIRKLL…LKSWLSSSPN (382 aa)). Residues 674 to 864 (SRLLDKLGIK…IIDLALTGVI (191 aa)) enclose the ATP-grasp 2 domain. ATP contacts are provided by Arg710, Lys749, Ile751, Glu756, Gly780, Val781, His782, Ser783, Gln823, and Glu835. Gln823, Glu835, and Asn837 together coordinate Mg(2+). Mn(2+) is bound by residues Gln823, Glu835, and Asn837. The region spanning 930–1052 (NRLPDQKGIA…YEIGEYGAGI (123 aa)) is the MGS-like domain. The allosteric domain stretch occupies residues 931 to 1052 (RLPDQKGIAL…YEIGEYGAGI (122 aa)).

This sequence belongs to the CarB family. As to quaternary structure, composed of two chains; the small (or glutamine) chain promotes the hydrolysis of glutamine to ammonia, which is used by the large (or ammonia) chain to synthesize carbamoyl phosphate. Tetramer of heterodimers (alpha,beta)4. Requires Mg(2+) as cofactor. Mn(2+) serves as cofactor.

The enzyme catalyses hydrogencarbonate + L-glutamine + 2 ATP + H2O = carbamoyl phosphate + L-glutamate + 2 ADP + phosphate + 2 H(+). It catalyses the reaction hydrogencarbonate + NH4(+) + 2 ATP = carbamoyl phosphate + 2 ADP + phosphate + 2 H(+). The protein operates within amino-acid biosynthesis; L-arginine biosynthesis; carbamoyl phosphate from bicarbonate: step 1/1. It functions in the pathway pyrimidine metabolism; UMP biosynthesis via de novo pathway; (S)-dihydroorotate from bicarbonate: step 1/3. Its function is as follows. Large subunit of the glutamine-dependent carbamoyl phosphate synthetase (CPSase). CPSase catalyzes the formation of carbamoyl phosphate from the ammonia moiety of glutamine, carbonate, and phosphate donated by ATP, constituting the first step of 2 biosynthetic pathways, one leading to arginine and/or urea and the other to pyrimidine nucleotides. The large subunit (synthetase) binds the substrates ammonia (free or transferred from glutamine from the small subunit), hydrogencarbonate and ATP and carries out an ATP-coupled ligase reaction, activating hydrogencarbonate by forming carboxy phosphate which reacts with ammonia to form carbamoyl phosphate. The sequence is that of Carbamoyl phosphate synthase large chain from Sulfolobus acidocaldarius (strain ATCC 33909 / DSM 639 / JCM 8929 / NBRC 15157 / NCIMB 11770).